A 237-amino-acid chain; its full sequence is Uridylate kinase (237 aa).

12-15 serves as a coordination point for ATP; it reads KLSG. The involved in allosteric activation by GTP stretch occupies residues 20–25; that stretch reads GEDGLG. Gly-54 serves as a coordination point for UMP. Positions 55 and 59 each coordinate ATP. Residues Asp-74 and 135–142 contribute to the UMP site; that span reads TGNPFFTT. ATP is bound by residues Thr-162, Tyr-168, and Asp-171.

This sequence belongs to the UMP kinase family. Homohexamer.

The protein resides in the cytoplasm. It carries out the reaction UMP + ATP = UDP + ADP. It participates in pyrimidine metabolism; CTP biosynthesis via de novo pathway; UDP from UMP (UMPK route): step 1/1. With respect to regulation, allosterically activated by GTP. Inhibited by UTP. Catalyzes the reversible phosphorylation of UMP to UDP. The protein is Uridylate kinase (pyrH) of Haemophilus influenzae (strain ATCC 51907 / DSM 11121 / KW20 / Rd).